A 396-amino-acid chain; its full sequence is MSKEKFERTKPHVNVGTIGHVDHGKTTLTAAITKIMSEARGGEFKDYADIDNAPEERERGITISTAHVEYESEARHYAHVDCPGHADYIKNMITGAAQMDGAIIVIAATDGPMAQTREHILLSKQVGVPYIVVYMNKADMVDDEELVELVELEIRELLDEYDFPGDDTPIIFGSALKALEGDMSDIGMSSIIKLVKALDTYIPTPKRDTDKSFLMPIEDVFSISGRGTVVTGRIEAGIVYVGDELEIVGIKDTQTTTCTGVEMFRKLLDSGEAGDNVGVLLRGTKREEVERGQVLAKPGSIKPHSKFEAEVYILSKDEGGRHTPFFNNYRPQFYFRTTDVTGACQLPDGVEMVMPGDNVKMQVELLSPIAMEDGLRFAIREGGRTVGAGVVSKVTD.

A tr-type G domain is found at 10 to 206 (KPHVNVGTIG…ALDTYIPTPK (197 aa)). Residues 19-26 (GHVDHGKT) form a G1 region. Residue 19–26 (GHVDHGKT) participates in GTP binding. Threonine 26 provides a ligand contact to Mg(2+). A G2 region spans residues 60 to 64 (GITIS). Positions 81-84 (DCPG) are G3. Residues 81-85 (DCPGH) and 136-139 (NKAD) contribute to the GTP site. Residues 136–139 (NKAD) are G4. The tract at residues 174-176 (SAL) is G5.

This sequence belongs to the TRAFAC class translation factor GTPase superfamily. Classic translation factor GTPase family. EF-Tu/EF-1A subfamily. Monomer.

It localises to the cytoplasm. It catalyses the reaction GTP + H2O = GDP + phosphate + H(+). GTP hydrolase that promotes the GTP-dependent binding of aminoacyl-tRNA to the A-site of ribosomes during protein biosynthesis. This is Elongation factor Tu 1 from Ruthia magnifica subsp. Calyptogena magnifica.